A 178-amino-acid chain; its full sequence is Adenine phosphoribosyltransferase (178 aa).

The protein belongs to the purine/pyrimidine phosphoribosyltransferase family. Homodimer.

It localises to the cytoplasm. It catalyses the reaction AMP + diphosphate = 5-phospho-alpha-D-ribose 1-diphosphate + adenine. It participates in purine metabolism; AMP biosynthesis via salvage pathway; AMP from adenine: step 1/1. Functionally, catalyzes a salvage reaction resulting in the formation of AMP, that is energically less costly than de novo synthesis. This is Adenine phosphoribosyltransferase from Bacteroides fragilis (strain ATCC 25285 / DSM 2151 / CCUG 4856 / JCM 11019 / LMG 10263 / NCTC 9343 / Onslow / VPI 2553 / EN-2).